Reading from the N-terminus, the 335-residue chain is Putative T-box protein 7 (335 aa).

The segment at residues 73–246 is a DNA-binding region (T-box); it reads LWSTFLECGT…NNPFAKGFRN (174 aa).

The protein localises to the nucleus. The polypeptide is Putative T-box protein 7 (Caenorhabditis elegans).